The following is a 101-amino-acid chain: Small ribosomal subunit protein uS14 (101 aa).

This sequence belongs to the universal ribosomal protein uS14 family. In terms of assembly, part of the 30S ribosomal subunit. Contacts proteins S3 and S10.

Binds 16S rRNA, required for the assembly of 30S particles and may also be responsible for determining the conformation of the 16S rRNA at the A site. This is Small ribosomal subunit protein uS14 from Protochlamydia amoebophila (strain UWE25).